We begin with the raw amino-acid sequence, 351 residues long: Cytoplasmic dynein 2 light intermediate chain 1 (351 aa).

The segment at 304–351 (TLKDVKDPAKDPQYAESEVDEMRIQKDQELEQYKRSSSKSWKQIELDS) is disordered. Residues 323 to 337 (DEMRIQKDQELEQYK) are compositionally biased toward basic and acidic residues.

Belongs to the dynein light intermediate chain family. As to quaternary structure, light intermediate chain of the cytoplasmic dynein complex 2, a multisubunit complex composed at least of eleven different proteins. The cytoplasmic dynein 2 complex consists of two catalytic heavy chains (HCs) and a number of non-catalytic subunits presented by intermediate chains (ICs), light intermediate chains (LICs) and light chains (LCs). Among them, a heavy chain (DYNC2H1), two intermediate chains (DYNC2I2 and DYNC2I1), a light intermediate chain (DYNC2LI1), and a light chain (DYNLT2B) are unique to the dynein-2 complex, but a subset of light chains are also shared by dynein-1 and dynein-2 complexes. Dynein-2 complex is built around two copies of cytoplasmic dynein 2 heavy chain 1 (DYNC2H1). The C-terminal region forms the motor domain, which converts the energy from ATP hydrolysis into movement. Its N-terminal region forms the tail, an extended structure that binds the other subunits and holds the two heavy chains in a homodimer. Interacts with DYNC2H1 (via N-terminus); this interaction stabilizes the dynein-2 complex structure.

The protein resides in the cytoplasm. Its subcellular location is the cell projection. It localises to the cilium. The protein localises to the cytoskeleton. It is found in the cilium basal body. The protein resides in the cilium axoneme. Its subcellular location is the microtubule organizing center. It localises to the centrosome. Its function is as follows. Acts as one of several non-catalytic accessory components of the cytoplasmic dynein 2 complex (dynein-2 complex), a motor protein complex that drives the movement of cargos along microtubules within cilia and flagella in concert with the intraflagellar transport (IFT) system, facilitating the assembly of these organelles. Involved in the regulation of ciliary length. In Bos taurus (Bovine), this protein is Cytoplasmic dynein 2 light intermediate chain 1 (DYNC2LI1).